The chain runs to 62 residues: MPKMKTKSGLKKRIKITATGKVKRGNAYRSHLAQNKTTKQKRQSRKSSQLSHSDFKRYKELI.

A compositionally biased stretch (basic residues) spans 1–26; sequence MPKMKTKSGLKKRIKITATGKVKRGN. Residues 1-62 are disordered; the sequence is MPKMKTKSGL…SDFKRYKELI (62 aa). The span at 53-62 shows a compositional bias: basic and acidic residues; that stretch reads SDFKRYKELI.

The protein belongs to the bacterial ribosomal protein bL35 family.

The polypeptide is Large ribosomal subunit protein bL35 (Metamycoplasma arthritidis (strain 158L3-1) (Mycoplasma arthritidis)).